A 318-amino-acid polypeptide reads, in one-letter code: Aspartate carbamoyltransferase catalytic subunit (318 aa).

Carbamoyl phosphate-binding residues include R54 and T55. Residue K82 participates in L-aspartate binding. The carbamoyl phosphate site is built by R104, H134, and Q137. 2 residues coordinate L-aspartate: R174 and R230. Carbamoyl phosphate contacts are provided by G271 and P272.

It belongs to the aspartate/ornithine carbamoyltransferase superfamily. ATCase family. As to quaternary structure, heterododecamer (2C3:3R2) of six catalytic PyrB chains organized as two trimers (C3), and six regulatory PyrI chains organized as three dimers (R2).

It carries out the reaction carbamoyl phosphate + L-aspartate = N-carbamoyl-L-aspartate + phosphate + H(+). It functions in the pathway pyrimidine metabolism; UMP biosynthesis via de novo pathway; (S)-dihydroorotate from bicarbonate: step 2/3. Catalyzes the condensation of carbamoyl phosphate and aspartate to form carbamoyl aspartate and inorganic phosphate, the committed step in the de novo pyrimidine nucleotide biosynthesis pathway. In Clavibacter sepedonicus (Clavibacter michiganensis subsp. sepedonicus), this protein is Aspartate carbamoyltransferase catalytic subunit.